The sequence spans 341 residues: HTH-type transcriptional repressor PurR (341 aa).

The HTH lacI-type domain occupies 2-56 (ATIKDVAKRAGVSTTTVSHVINKTRFVAEETKAAVRAAIKELHYSPSAVARSLKV). Residues 4–23 (IKDVAKRAGVSTTTVSHVIN) constitute a DNA-binding region (H-T-H motif). Residues 48–56 (SAVARSLKV) mediate DNA binding. Positions 73, 190, 192, 221, and 275 each coordinate hypoxanthine.

Homodimer.

It participates in purine metabolism; purine nucleotide biosynthesis [regulation]. In terms of biological role, is the main repressor of the genes involved in the de novo synthesis of purine nucleotides, regulating purB, purC, purEK, purF, purHD, purL, purMN and guaBA expression. PurR is allosterically activated to bind its cognate DNA by binding the purine corepressors, hypoxanthine or guanine, thereby effecting transcription repression. This is HTH-type transcriptional repressor PurR from Pectobacterium atrosepticum (strain SCRI 1043 / ATCC BAA-672) (Erwinia carotovora subsp. atroseptica).